The chain runs to 101 residues: uncharacterized protein (101 aa).

An N-terminal signal peptide occupies residues 1-25; that stretch reads MRKKRLLSRISFSSLFLLCGTLLSA. Residue Cys-26 is the site of N-palmitoyl cysteine attachment. Cys-26 carries the S-diacylglycerol cysteine lipid modification.

The protein belongs to the MG439/MG440 family.

It is found in the cell membrane. This is an uncharacterized protein from Mycoplasma pneumoniae (strain ATCC 29342 / M129 / Subtype 1) (Mycoplasmoides pneumoniae).